A 261-amino-acid polypeptide reads, in one-letter code: 3-deoxy-manno-octulosonate cytidylyltransferase (261 aa).

It belongs to the KdsB family.

It is found in the cytoplasm. The enzyme catalyses 3-deoxy-alpha-D-manno-oct-2-ulosonate + CTP = CMP-3-deoxy-beta-D-manno-octulosonate + diphosphate. Its pathway is nucleotide-sugar biosynthesis; CMP-3-deoxy-D-manno-octulosonate biosynthesis; CMP-3-deoxy-D-manno-octulosonate from 3-deoxy-D-manno-octulosonate and CTP: step 1/1. It participates in bacterial outer membrane biogenesis; lipopolysaccharide biosynthesis. In terms of biological role, activates KDO (a required 8-carbon sugar) for incorporation into bacterial lipopolysaccharide in Gram-negative bacteria. The protein is 3-deoxy-manno-octulosonate cytidylyltransferase of Dechloromonas aromatica (strain RCB).